The chain runs to 164 residues: Lipoprotein signal peptidase (164 aa).

3 helical membrane-spanning segments follow: residues 12–32 (WLWL…LILQ), 70–90 (WFFA…MYRS), and 102–122 (ALII…GFVV). Catalysis depends on residues D123 and D141. Residues 137 to 157 (FNLADTAICVGAALIVLEGFL) traverse the membrane as a helical segment.

The protein belongs to the peptidase A8 family.

It is found in the cell inner membrane. It catalyses the reaction Release of signal peptides from bacterial membrane prolipoproteins. Hydrolyzes -Xaa-Yaa-Zaa-|-(S,diacylglyceryl)Cys-, in which Xaa is hydrophobic (preferably Leu), and Yaa (Ala or Ser) and Zaa (Gly or Ala) have small, neutral side chains.. Its pathway is protein modification; lipoprotein biosynthesis (signal peptide cleavage). Its function is as follows. This protein specifically catalyzes the removal of signal peptides from prolipoproteins. The chain is Lipoprotein signal peptidase from Shigella flexneri.